The chain runs to 280 residues: Succinate dehydrogenase [ubiquinone] iron-sulfur subunit, mitochondrial (280 aa).

Residues 1 to 28 (MAAVVAVSLKRWFPATTLGGACLQACRG) constitute a mitochondrion transit peptide. Residues 40 to 131 (KKFAIYRWDP…DKVSKIYPLP (92 aa)) enclose the 2Fe-2S ferredoxin-type domain. 2 positions are modified to N6-acetyllysine: K51 and K55. The [2Fe-2S] cluster site is built by C93, C98, C101, and C113. Residues 146-218 (FYAQYKSIEP…PAVLMQAYRW (73 aa)) are interaction with SDHAF1. One can recognise a 4Fe-4S ferredoxin-type domain in the interval 176-206 (EREKLDGLYECILCACCSTSCPSYWWNGDKY). The [4Fe-4S] cluster site is built by C186, C189, and C192. C196 contacts [3Fe-4S] cluster. A ubiquinone is bound at residue W201. [3Fe-4S] cluster is bound by residues C243 and C249. C253 contributes to the [4Fe-4S] cluster binding site.

It belongs to the succinate dehydrogenase/fumarate reductase iron-sulfur protein family. Component of complex II composed of four subunits: the flavoprotein (FP) SDHA, iron-sulfur protein (IP) SDHB, and a cytochrome b560 composed of SDHC and SDHD. Interacts with SDHAF1; the interaction is required for iron-sulfur cluster incorporation into SDHB. Requires [2Fe-2S] cluster as cofactor. It depends on [3Fe-4S] cluster as a cofactor. The cofactor is [4Fe-4S] cluster.

Its subcellular location is the mitochondrion inner membrane. It catalyses the reaction a quinone + succinate = fumarate + a quinol. It carries out the reaction (R)-malate + a quinone = enol-oxaloacetate + a quinol. The catalysed reaction is (S)-malate + a quinone = enol-oxaloacetate + a quinol. Its pathway is carbohydrate metabolism; tricarboxylic acid cycle; fumarate from succinate (eukaryal route): step 1/1. Its activity is regulated as follows. Enol-oxaloacetate inhibits the succinate dehydrogenase activity. In terms of biological role, iron-sulfur protein (IP) subunit of the succinate dehydrogenase complex (mitochondrial respiratory chain complex II), responsible for transferring electrons from succinate to ubiquinone (coenzyme Q). SDH also oxidizes malate to the non-canonical enol form of oxaloacetate, enol-oxaloacetate. Enol-oxaloacetate, which is a potent inhibitor of the succinate dehydrogenase activity, is further isomerized into keto-oxaloacetate. The sequence is that of Succinate dehydrogenase [ubiquinone] iron-sulfur subunit, mitochondrial (SDHB) from Sus scrofa (Pig).